The following is a 694-amino-acid chain: Cyclic nucleotide-gated ion channel 4 (694 aa).

Basic and acidic residues predominate over residues 1–15; that stretch reads MATEQEFTRASRFSR. A disordered region spans residues 1–64; that stretch reads MATEQEFTRA…RIGLTCGGRR (64 aa). The Cytoplasmic portion of the chain corresponds to 1–92; that stretch reads MATEQEFTRA…RSKWVREWNK (92 aa). Residues 24 to 53 show a composition bias toward acidic residues; it reads SEEDNTEEEDEEEEEMEEIEEEEEEEEEED. A helical membrane pass occupies residues 93–113; it reads VFLLVCATGLFVDPLFLYTLS. The Extracellular portion of the chain corresponds to 114–126; the sequence is VSDTCMCLLVDGW. A helical membrane pass occupies residues 127–147; sequence LALTVTALRSMTDLLHLWNIW. The Cytoplasmic segment spans residues 148 to 187; sequence IQFKIARRWPYPGGDSDGDTNKGGGTRGSTRVAPPYVKKN. The helical transmembrane segment at 188–208 threads the bilayer; sequence GFFFDLFVILPLPQVVLWVVI. Residues 209–216 lie on the Extracellular side of the membrane; sequence PSLLKRGS. A helical transmembrane segment spans residues 217-237; the sequence is VTLVVSVLLVTFLFQYLPKIY. The Cytoplasmic segment spans residues 238–251; the sequence is HSIRHLRRNATLSG. Residues 252–272 form a helical membrane-spanning segment; it reads YIFGTVWWGIALNMIAYFVAA. Residues 273-392 are Extracellular-facing; sequence HAAGACWYLL…LESTTEWSEV (120 aa). A helical membrane pass occupies residues 393–413; it reads VFNIIVLTSGLLLVTMLIGNI. At 414 to 694 the chain is on the cytoplasmic side; the sequence is KVFLHATTSK…KPNPDDFDDY (281 aa). Residues 496 to 626 and Asp565 each bind a nucleoside 3',5'-cyclic phosphate; that span reads LFQH…ARYY. Residues 610–626 are calmodulin-binding; it reads FRYTFVNEKVKRSARYY. The IQ domain maps to 631 to 660; that stretch reads RTWAAVAVQLAWRRYKHRLTLTSLSFIRPR.

This sequence belongs to the cyclic nucleotide-gated cation channel (TC 1.A.1.5) family. In terms of assembly, homotetramer or heterotetramer.

Its subcellular location is the cell membrane. Its function is as follows. Acts as a cyclic nucleotide-gated ion channel. Permeable to potassium and sodium in a cyclic nucleotide-dependent fashion (cAMP or cGMP). Might constitute a common downstream component of the signaling pathways leading to hypersensitive response (HR). The sequence is that of Cyclic nucleotide-gated ion channel 4 (CNGC4) from Arabidopsis thaliana (Mouse-ear cress).